The sequence spans 215 residues: Putative serine/threonine-protein kinase YrzF (215 aa).

One can recognise a Protein kinase domain in the interval 27-215 (SEELTLIGKG…HFAQRKRKYS (189 aa)). ATP is bound by residues 33 to 41 (IGKGRSAYV) and Lys54. Catalysis depends on Asp135, which acts as the Proton acceptor.

It belongs to the protein kinase superfamily. Ser/Thr protein kinase family.

The catalysed reaction is L-seryl-[protein] + ATP = O-phospho-L-seryl-[protein] + ADP + H(+). It carries out the reaction L-threonyl-[protein] + ATP = O-phospho-L-threonyl-[protein] + ADP + H(+). The polypeptide is Putative serine/threonine-protein kinase YrzF (yrzF) (Bacillus subtilis (strain 168)).